The sequence spans 162 residues: Class I hydrophobin 3 (162 aa).

Disulfide bonds link cysteine 36–cysteine 150 and cysteine 151–cysteine 159.

The protein belongs to the fungal hydrophobin family. Self-assembles to form functional amyloid fibrils called rodlets. Self-assembly into fibrillar rodlets occurs spontaneously at hydrophobic:hydrophilic interfaces and the rodlets further associate laterally to form amphipathic monolayers.

Its subcellular location is the secreted. It is found in the cell wall. Functionally, aerial growth, conidiation, and dispersal of filamentous fungi in the environment rely upon a capability of their secreting small amphipathic proteins called hydrophobins (HPBs) with low sequence identity. Class I can self-assemble into an outermost layer of rodlet bundles on aerial cell surfaces, conferring cellular hydrophobicity that supports fungal growth, development and dispersal; whereas Class II form highly ordered films at water-air interfaces through intermolecular interactions but contribute nothing to the rodlet structure. This Coprinopsis cinerea (strain Okayama-7 / 130 / ATCC MYA-4618 / FGSC 9003) (Inky cap fungus) protein is Class I hydrophobin 3.